The following is a 660-amino-acid chain: DNA mismatch repair protein MutL (660 aa).

A disordered region spans residues 414 to 433; that stretch reads SSVKHASRPQNTFTETDHPN.

The protein belongs to the DNA mismatch repair MutL/HexB family.

Functionally, this protein is involved in the repair of mismatches in DNA. It is required for dam-dependent methyl-directed DNA mismatch repair. May act as a 'molecular matchmaker', a protein that promotes the formation of a stable complex between two or more DNA-binding proteins in an ATP-dependent manner without itself being part of a final effector complex. This Streptococcus pyogenes serotype M5 (strain Manfredo) protein is DNA mismatch repair protein MutL.